The primary structure comprises 493 residues: 3-octaprenyl-4-hydroxybenzoate carboxy-lyase (493 aa).

Asn172 contacts Mn(2+). Prenylated FMN-binding positions include 175 to 177 (IYR), 189 to 191 (RWL), and 194 to 195 (RG). Residue Glu238 coordinates Mn(2+). Asp287 acts as the Proton donor in catalysis.

Belongs to the UbiD family. Homohexamer. Prenylated FMN serves as cofactor. Mn(2+) is required as a cofactor.

The protein resides in the cell membrane. It carries out the reaction a 4-hydroxy-3-(all-trans-polyprenyl)benzoate + H(+) = a 2-(all-trans-polyprenyl)phenol + CO2. It participates in cofactor biosynthesis; ubiquinone biosynthesis. Functionally, catalyzes the decarboxylation of 3-octaprenyl-4-hydroxy benzoate to 2-octaprenylphenol, an intermediate step in ubiquinone biosynthesis. The chain is 3-octaprenyl-4-hydroxybenzoate carboxy-lyase from Shewanella sp. (strain ANA-3).